Here is a 145-residue protein sequence, read N- to C-terminus: Cuticle protein 65 (145 aa).

Repeat copies occupy residues 27–30 (AAPA), 33–37 (AAPAV), 39–42 (AAPA), 86–89 (AAPV), 92–95 (AAPA), 98–101 (AAPA), and 123–126 (AAPA).

Component of the cuticle of migratory locust which contains more than 100 different structural proteins. The polypeptide is Cuticle protein 65 (Locusta migratoria (Migratory locust)).